A 505-amino-acid chain; its full sequence is Pentatricopeptide repeat-containing protein At2g17033 (505 aa).

PPR repeat units lie at residues 243–277, 278–312, and 313–347; these read KTQAYKSMVSGLCNMDQPHDAERVIEEMRMEKIKP, GLFEYKSVLYGYGRLGLFDDMNRVVHRMGTEGHKI, and DTVCSNMVLSSYGAHDALPQMGSWLQKLKGFNVPF. The region spanning 413 to 503 is the Smr domain; that stretch reads LDLHGMHLSS…AKGKTVKEWL (91 aa).

Belongs to the PPR family. P subfamily.

This chain is Pentatricopeptide repeat-containing protein At2g17033, found in Arabidopsis thaliana (Mouse-ear cress).